A 257-amino-acid chain; its full sequence is Phycoerythrobilin:ferredoxin oxidoreductase (257 aa).

Belongs to the HY2 family.

The catalysed reaction is (3Z)-phycoerythrobilin + oxidized 2[4Fe-4S]-[ferredoxin] = 15,16-dihydrobiliverdin + reduced 2[4Fe-4S]-[ferredoxin] + 2 H(+). Functionally, catalyzes the two-electron reduction of the C2 and C3(1) diene system of 15,16-dihydrobiliverdin. This Synechococcus sp. (strain CC9902) protein is Phycoerythrobilin:ferredoxin oxidoreductase.